A 150-amino-acid polypeptide reads, in one-letter code: UPF0756 membrane protein YPN_1328 (150 aa).

The next 4 membrane-spanning stretches (helical) occupy residues 16–36 (ALGI…LIAI), 51–71 (YGLT…IASG), 88–108 (ILAI…VSLM), and 114–134 (VVAG…GVPV).

The protein belongs to the UPF0756 family.

The protein localises to the cell membrane. The sequence is that of UPF0756 membrane protein YPN_1328 from Yersinia pestis bv. Antiqua (strain Nepal516).